The sequence spans 614 residues: Dihydroxy-acid dehydratase (614 aa).

Mg(2+) is bound at residue aspartate 81. Cysteine 122 is a binding site for [2Fe-2S] cluster. The Mg(2+) site is built by aspartate 123 and lysine 124. Residue lysine 124 is modified to N6-carboxylysine. Cysteine 193 contacts [2Fe-2S] cluster. Position 489 (glutamate 489) interacts with Mg(2+). Residue serine 515 is the Proton acceptor of the active site.

It belongs to the IlvD/Edd family. In terms of assembly, homodimer. [2Fe-2S] cluster is required as a cofactor. Mg(2+) serves as cofactor.

The catalysed reaction is (2R)-2,3-dihydroxy-3-methylbutanoate = 3-methyl-2-oxobutanoate + H2O. It carries out the reaction (2R,3R)-2,3-dihydroxy-3-methylpentanoate = (S)-3-methyl-2-oxopentanoate + H2O. It participates in amino-acid biosynthesis; L-isoleucine biosynthesis; L-isoleucine from 2-oxobutanoate: step 3/4. The protein operates within amino-acid biosynthesis; L-valine biosynthesis; L-valine from pyruvate: step 3/4. Functionally, functions in the biosynthesis of branched-chain amino acids. Catalyzes the dehydration of (2R,3R)-2,3-dihydroxy-3-methylpentanoate (2,3-dihydroxy-3-methylvalerate) into 2-oxo-3-methylpentanoate (2-oxo-3-methylvalerate) and of (2R)-2,3-dihydroxy-3-methylbutanoate (2,3-dihydroxyisovalerate) into 2-oxo-3-methylbutanoate (2-oxoisovalerate), the penultimate precursor to L-isoleucine and L-valine, respectively. The polypeptide is Dihydroxy-acid dehydratase (Hahella chejuensis (strain KCTC 2396)).